We begin with the raw amino-acid sequence, 803 residues long: Urocanate reductase (803 aa).

Position 258 is an FMN phosphoryl serine (Ser258). FAD contacts are provided by Ala311, Glu330, Asn338, Thr339, Gly343, Gly344, and Asp573. The active-site Proton donor is Arg632. Residues His739, Glu768, Ala783, and Leu784 each contribute to the FAD site.

The protein belongs to the FAD-dependent oxidoreductase 2 family. FRD/SDH subfamily. FAD serves as cofactor. It depends on FMN as a cofactor.

It carries out the reaction dihydrourocanate + A = urocanate + AH2. In terms of biological role, catalyzes the two-electron reduction of urocanate to dihydrourocanate (also named imidazole propionate or deamino-histidine). Dihydrourocanate is present at higher concentrations in subjects with type 2 diabetes, and directly impairs glucose tolerance and insulin signaling at the level of insulin receptor substrate (IRS) through activation of p38 gamma (MAPK12)-p62-mTORC1. Therefore, the UrdA enzyme from the gut bacteria S.mutans strain UA159 may contribute to the pathogenesis of type 2 diabetes by producing the microbial metabolite dihydrourocanate. The polypeptide is Urocanate reductase (Streptococcus mutans serotype c (strain ATCC 700610 / UA159)).